We begin with the raw amino-acid sequence, 698 residues long: MARKTPIERYRNIGISAHIDAGKTTTTERILFYTGVNHKIGEVHDGAATMDWMEQEQERGITITSAATTCFWKGMEMSFPEHRFNIIDTPGHVDFTIEVERSMRVLDGACMVYCAVGGVQPQSETVWRQATKYKVPRLAFVNKMDRQGANFFKVVEQMKLRLKANPVPIVIPIGAEENFVGVVDLVRMKAIYWDEASQGMKFDYREIPGELQATAEEWREKMLEAAAEASEELMNEYLENGDLSHEKIVAGLRQRTIACEIQPMLCGTAFKNKGVQRMLDAVIELLPSPVDIPPVAGIDDYEKPVERRADDSEKFAALAFKLMTDPFVGQLTFVRVYSGVLKSGETVLNSVKGKKERIGRILQMHANERQEIKEVLAGDIAACVGLKEVTTGETLCDPSAPIILERMVFPEPVIHVAVEPKTKADQEKMGIALGRLAAEDPSFRVRTDEESGQTIISGMGELHLEILVDRMKREFNVEATVGAPQVAYREAIRKPVEQEGKFVKQSGGRGQFGHVWIKLEPNETGKGYEFIDAIKGGVVPREYIPAVDKGLQETLPNGVLAGFPVVDVKVTLFDGSYHDVDSNENAFKMAASMAFKDAMRKASPVLLEPMMAVVVETPEDYMGNVMGDLSGRRGIVQGMDDLPGGMKEVKAEVPLAEMFGYATQLRSLTQGRATYSMEFKHYSEAPKSVAEAVINNRK.

The tr-type G domain maps to 8–290 (ERYRNIGISA…AVIELLPSPV (283 aa)). GTP contacts are provided by residues 17 to 24 (AHIDAGKT), 88 to 92 (DTPGH), and 142 to 145 (NKMD).

Belongs to the TRAFAC class translation factor GTPase superfamily. Classic translation factor GTPase family. EF-G/EF-2 subfamily.

The protein resides in the cytoplasm. Catalyzes the GTP-dependent ribosomal translocation step during translation elongation. During this step, the ribosome changes from the pre-translocational (PRE) to the post-translocational (POST) state as the newly formed A-site-bound peptidyl-tRNA and P-site-bound deacylated tRNA move to the P and E sites, respectively. Catalyzes the coordinated movement of the two tRNA molecules, the mRNA and conformational changes in the ribosome. The chain is Elongation factor G from Aromatoleum aromaticum (strain DSM 19018 / LMG 30748 / EbN1) (Azoarcus sp. (strain EbN1)).